The following is a 201-amino-acid chain: Inosine triphosphate pyrophosphatase (201 aa).

16-21 (TGNAKK) is an ITP binding site. Glu-44 contributes to the Mg(2+) binding site. Residues Lys-56, 72 to 73 (DT), Lys-89, 148 to 151 (FGWD), Lys-171, and 176 to 177 (HR) contribute to the ITP site.

Belongs to the HAM1 NTPase family. In terms of assembly, homodimer. The cofactor is Mg(2+). It depends on Mn(2+) as a cofactor.

It is found in the cytoplasm. The enzyme catalyses ITP + H2O = IMP + diphosphate + H(+). The catalysed reaction is dITP + H2O = dIMP + diphosphate + H(+). It catalyses the reaction XTP + H2O = XMP + diphosphate + H(+). In terms of biological role, pyrophosphatase that hydrolyzes non-canonical purine nucleotides such as inosine triphosphate (ITP), deoxyinosine triphosphate (dITP) or xanthosine 5'-triphosphate (XTP) to their respective monophosphate derivatives. The enzyme does not distinguish between the deoxy- and ribose forms. Probably excludes non-canonical purines from RNA and DNA precursor pools, thus preventing their incorporation into RNA and DNA and avoiding chromosomal lesions. The polypeptide is Inosine triphosphate pyrophosphatase (Sorghum bicolor (Sorghum)).